The primary structure comprises 70 residues: Small ribosomal subunit protein eS17 (70 aa).

This sequence belongs to the eukaryotic ribosomal protein eS17 family.

The polypeptide is Small ribosomal subunit protein eS17 (Methanopyrus kandleri (strain AV19 / DSM 6324 / JCM 9639 / NBRC 100938)).